Reading from the N-terminus, the 260-residue chain is UPF0294 protein plu0699 (260 aa).

This sequence belongs to the UPF0294 family.

The protein resides in the cytoplasm. This chain is UPF0294 protein plu0699, found in Photorhabdus laumondii subsp. laumondii (strain DSM 15139 / CIP 105565 / TT01) (Photorhabdus luminescens subsp. laumondii).